The primary structure comprises 393 residues: MENDTVSEMNQTELQPQAAVALEYQVVTILLVVIICGLGIVGNIMVVLVVMRTKHMRTPTNCYLVSLAVADLMVLVAAGLPNITDSIYGSWVYGYVGCLCITYLQYLGINASSCSITAFTIERYIAICHPIKAQFLCTFSRAKKIIIFVWAFTSIYCMLWFFLLDLNISTYKNAVVVSCGYKISRNYYSPIYLMDFGVFYVVPMILATVLYGFIARILFLNPIPSDPKENSKMWKNDSIHQNKNLNLNATNRCFNSTVSSRKQVTKMLAVVVILFALLWMPYRTLVVVNSFLSSPFQENWFLLFCRICIYLNSAINPVIYNLMSQKFRAAFRKLCNCKQKPTEKAANYSVALNYSVIKESDRFSTELEDITVTDTYVSTTKVSFDDTCLASEN.

Residues 1 to 28 lie on the Extracellular side of the membrane; sequence MENDTVSEMNQTELQPQAAVALEYQVVT. N-linked (GlcNAc...) asparagine glycosylation is found at asparagine 3 and asparagine 10. Residues 29-51 form a helical membrane-spanning segment; the sequence is ILLVVIICGLGIVGNIMVVLVVM. Topologically, residues 52 to 61 are cytoplasmic; sequence RTKHMRTPTN. Residues 62 to 83 form a helical membrane-spanning segment; the sequence is CYLVSLAVADLMVLVAAGLPNI. At 84-99 the chain is on the extracellular side; it reads TDSIYGSWVYGYVGCL. A disulfide bridge connects residues cysteine 98 and cysteine 179. Residues 100-121 traverse the membrane as a helical segment; that stretch reads CITYLQYLGINASSCSITAFTI. Residues 122 to 144 lie on the Cytoplasmic side of the membrane; the sequence is ERYIAICHPIKAQFLCTFSRAKK. Residues 145–168 traverse the membrane as a helical segment; the sequence is IIIFVWAFTSIYCMLWFFLLDLNI. The Extracellular portion of the chain corresponds to 169–193; sequence STYKNAVVVSCGYKISRNYYSPIYL. A helical membrane pass occupies residues 194–215; that stretch reads MDFGVFYVVPMILATVLYGFIA. Topologically, residues 216–266 are cytoplasmic; that stretch reads RILFLNPIPSDPKENSKMWKNDSIHQNKNLNLNATNRCFNSTVSSRKQVTK. A helical membrane pass occupies residues 267 to 288; the sequence is MLAVVVILFALLWMPYRTLVVV. Over 289-296 the chain is Extracellular; the sequence is NSFLSSPF. Residues 297 to 319 form a helical membrane-spanning segment; sequence QENWFLLFCRICIYLNSAINPVI. The Cytoplasmic portion of the chain corresponds to 320–393; sequence YNLMSQKFRA…FDDTCLASEN (74 aa).

The protein belongs to the G-protein coupled receptor 1 family.

Its subcellular location is the cell membrane. Receptor for thyrotropin-releasing hormone (TRH). Upon ligand binding, this G-protein-coupled receptor triggers activation of the phosphatidylinositol (IP3)-calcium-protein kinase C (PKC) pathway. This Mus musculus (Mouse) protein is Thyrotropin-releasing hormone receptor (Trhr).